Consider the following 365-residue polypeptide: Methionine import ATP-binding protein MetN (365 aa).

One can recognise an ABC transporter domain in the interval 26–261; sequence VRLVDLKRRF…PQSDITKSLL (236 aa). 58-65 serves as a coordination point for ATP; that stretch reads GRSGAGKS.

This sequence belongs to the ABC transporter superfamily. Methionine importer (TC 3.A.1.24) family. As to quaternary structure, the complex is composed of two ATP-binding proteins (MetN), two transmembrane proteins (MetI) and a solute-binding protein (MetQ).

The protein localises to the cell inner membrane. The catalysed reaction is L-methionine(out) + ATP + H2O = L-methionine(in) + ADP + phosphate + H(+). It carries out the reaction D-methionine(out) + ATP + H2O = D-methionine(in) + ADP + phosphate + H(+). In terms of biological role, part of the ABC transporter complex MetNIQ involved in methionine import. Responsible for energy coupling to the transport system. The sequence is that of Methionine import ATP-binding protein MetN from Mesorhizobium japonicum (strain LMG 29417 / CECT 9101 / MAFF 303099) (Mesorhizobium loti (strain MAFF 303099)).